We begin with the raw amino-acid sequence, 360 residues long: DNA replication and repair protein RecF (360 aa).

30–37 (GANGSGKT) serves as a coordination point for ATP.

This sequence belongs to the RecF family.

It is found in the cytoplasm. Its function is as follows. The RecF protein is involved in DNA metabolism; it is required for DNA replication and normal SOS inducibility. RecF binds preferentially to single-stranded, linear DNA. It also seems to bind ATP. This is DNA replication and repair protein RecF from Acinetobacter baumannii (strain ATCC 17978 / DSM 105126 / CIP 53.77 / LMG 1025 / NCDC KC755 / 5377).